Consider the following 533-residue polypeptide: GMP synthase [glutamine-hydrolyzing] (533 aa).

Residues 22-215 form the Glutamine amidotransferase type-1 domain; it reads RILILDFGSQ…THNVAGCSGT (194 aa). The active-site Nucleophile is the cysteine 99. Active-site residues include histidine 189 and glutamate 191. The GMPS ATP-PPase domain occupies 216 to 408; that stretch reads WTMAGFRELE…LGIPESIVGR (193 aa). Residue 243-249 coordinates ATP; it reads SGGVDSS.

Homodimer.

The enzyme catalyses XMP + L-glutamine + ATP + H2O = GMP + L-glutamate + AMP + diphosphate + 2 H(+). It functions in the pathway purine metabolism; GMP biosynthesis; GMP from XMP (L-Gln route): step 1/1. Its function is as follows. Catalyzes the synthesis of GMP from XMP. This chain is GMP synthase [glutamine-hydrolyzing], found in Gluconobacter oxydans (strain 621H) (Gluconobacter suboxydans).